The sequence spans 234 residues: Cell polarity protein alp11 (234 aa).

One can recognise a Ubiquitin-like domain in the interval 4-88 (ITLFIKSSSA…IVVEDTRPPH (85 aa)). In terms of domain architecture, CAP-Gly spans 174–216 (VPEINNDNLWVGVEFDEPVGKNDGTVSGKRYFNAKNKHGSFLR). The residue at position 213 (S213) is a Phosphoserine.

The protein belongs to the TBCB family. As to quaternary structure, binds to monomeric alpha-tubulin. Interacts with alp21.

Its subcellular location is the cytoplasm. It localises to the cytoskeleton. In terms of biological role, required for microtubule function and cell polarity. Involved in the proper folding of alpha-tubulin. This Schizosaccharomyces pombe (strain 972 / ATCC 24843) (Fission yeast) protein is Cell polarity protein alp11 (alp11).